Consider the following 542-residue polypeptide: Membrane protein insertase YidC (542 aa).

A run of 5 helical transmembrane segments spans residues 7 to 27, 338 to 358, 417 to 437, 455 to 475, and 494 to 514; these read LLVMGLLLVSFLIFTQWQQDF, FALLTFIQSIVTNWGLAIIGV, MGGCLPILIQMPIFIALYWTF, LSAQDPYYILPLLMGASMFLL, and FMPVMFTVFFLWFPSGLVLYW.

The protein belongs to the OXA1/ALB3/YidC family. Type 1 subfamily. Interacts with the Sec translocase complex via SecD. Specifically interacts with transmembrane segments of nascent integral membrane proteins during membrane integration.

Its subcellular location is the cell inner membrane. In terms of biological role, required for the insertion and/or proper folding and/or complex formation of integral membrane proteins into the membrane. Involved in integration of membrane proteins that insert both dependently and independently of the Sec translocase complex, as well as at least some lipoproteins. Aids folding of multispanning membrane proteins. The sequence is that of Membrane protein insertase YidC from Actinobacillus pleuropneumoniae serotype 7 (strain AP76).